The chain runs to 276 residues: Acyl-[acyl-carrier-protein]--UDP-N-acetylglucosamine O-acyltransferase (276 aa).

It belongs to the transferase hexapeptide repeat family. LpxA subfamily. In terms of assembly, homotrimer.

The protein localises to the cytoplasm. It catalyses the reaction a (3R)-hydroxyacyl-[ACP] + UDP-N-acetyl-alpha-D-glucosamine = a UDP-3-O-[(3R)-3-hydroxyacyl]-N-acetyl-alpha-D-glucosamine + holo-[ACP]. It participates in glycolipid biosynthesis; lipid IV(A) biosynthesis; lipid IV(A) from (3R)-3-hydroxytetradecanoyl-[acyl-carrier-protein] and UDP-N-acetyl-alpha-D-glucosamine: step 1/6. Functionally, involved in the biosynthesis of lipid A, a phosphorylated glycolipid that anchors the lipopolysaccharide to the outer membrane of the cell. This Gloeothece citriformis (strain PCC 7424) (Cyanothece sp. (strain PCC 7424)) protein is Acyl-[acyl-carrier-protein]--UDP-N-acetylglucosamine O-acyltransferase.